Here is a 73-residue protein sequence, read N- to C-terminus: Translation initiation factor IF-1 (73 aa).

The 73-residue stretch at 1 to 73 folds into the S1-like domain; that stretch reads MPKKDGAIEI…TRGRIVYRYK (73 aa).

It belongs to the IF-1 family. In terms of assembly, component of the 30S ribosomal translation pre-initiation complex which assembles on the 30S ribosome in the order IF-2 and IF-3, IF-1 and N-formylmethionyl-tRNA(fMet); mRNA recruitment can occur at any time during PIC assembly.

It localises to the cytoplasm. Its function is as follows. One of the essential components for the initiation of protein synthesis. Stabilizes the binding of IF-2 and IF-3 on the 30S subunit to which N-formylmethionyl-tRNA(fMet) subsequently binds. Helps modulate mRNA selection, yielding the 30S pre-initiation complex (PIC). Upon addition of the 50S ribosomal subunit IF-1, IF-2 and IF-3 are released leaving the mature 70S translation initiation complex. This Salinispora arenicola (strain CNS-205) protein is Translation initiation factor IF-1.